Consider the following 469-residue polypeptide: Cysteine--tRNA ligase (469 aa).

A Zn(2+)-binding site is contributed by C28. The 'HIGH' region signature appears at 30–40 (PTVYNYIHIGN). Residues C213, H238, and E242 each coordinate Zn(2+). The 'KMSKS' region motif lies at 270–274 (KMSKS). ATP is bound at residue K273.

The protein belongs to the class-I aminoacyl-tRNA synthetase family. As to quaternary structure, monomer. It depends on Zn(2+) as a cofactor.

The protein localises to the cytoplasm. The enzyme catalyses tRNA(Cys) + L-cysteine + ATP = L-cysteinyl-tRNA(Cys) + AMP + diphosphate. This chain is Cysteine--tRNA ligase, found in Leuconostoc citreum (strain KM20).